Consider the following 201-residue polypeptide: Large ribosomal subunit protein uL4 (201 aa).

The tract at residues 44-68 (KAQKTRSEVAGTTKKSKKQKGGGAR) is disordered.

Belongs to the universal ribosomal protein uL4 family. In terms of assembly, part of the 50S ribosomal subunit.

Its function is as follows. One of the primary rRNA binding proteins, this protein initially binds near the 5'-end of the 23S rRNA. It is important during the early stages of 50S assembly. It makes multiple contacts with different domains of the 23S rRNA in the assembled 50S subunit and ribosome. Functionally, forms part of the polypeptide exit tunnel. The protein is Large ribosomal subunit protein uL4 of Xanthomonas axonopodis pv. citri (strain 306).